The chain runs to 291 residues: HTH-type transcriptional activator AmpR (291 aa).

The 58-residue stretch at 6 to 63 (IPLNSLRAFEAAARHLSFTRAAIELNVTHSAISQHVKSLEQQLNCQLFVRGSRGLMLT) folds into the HTH lysR-type domain. Residues 23 to 42 (FTRAAIELNVTHSAISQHVK) constitute a DNA-binding region (H-T-H motif).

The protein belongs to the LysR transcriptional regulatory family.

It is found in the cytoplasm. Its function is as follows. Regulates the expression of the beta-lactamase gene. Represses cephalosporinase (AmpC) in the presence of beta-lactams and induces it in the absence of them. The polypeptide is HTH-type transcriptional activator AmpR (ampR) (Citrobacter freundii).